The following is a 66-amino-acid chain: Small ribosomal subunit protein bS21 (66 aa).

This sequence belongs to the bacterial ribosomal protein bS21 family.

The sequence is that of Small ribosomal subunit protein bS21 from Solidesulfovibrio magneticus (strain ATCC 700980 / DSM 13731 / RS-1) (Desulfovibrio magneticus).